Here is a 453-residue protein sequence, read N- to C-terminus: Glutamyl-tRNA(Gln) amidotransferase subunit A (453 aa).

Active-site charge relay system residues include K56 and S131. S155 acts as the Acyl-ester intermediate in catalysis.

It belongs to the amidase family. GatA subfamily. As to quaternary structure, heterotrimer of A, B and C subunits.

It carries out the reaction L-glutamyl-tRNA(Gln) + L-glutamine + ATP + H2O = L-glutaminyl-tRNA(Gln) + L-glutamate + ADP + phosphate + H(+). Its function is as follows. Allows the formation of correctly charged Gln-tRNA(Gln) through the transamidation of misacylated Glu-tRNA(Gln) in organisms which lack glutaminyl-tRNA synthetase. The reaction takes place in the presence of glutamine and ATP through an activated gamma-phospho-Glu-tRNA(Gln). This Campylobacter jejuni subsp. jejuni serotype O:6 (strain 81116 / NCTC 11828) protein is Glutamyl-tRNA(Gln) amidotransferase subunit A.